The chain runs to 402 residues: RNA-binding protein 42 (402 aa).

The interval 240 to 275 (ETASDDSVIGPSMPEPEPVHVEPVDTSTEDKKKGKQ) is disordered. Over residues 256 to 275 (EPVHVEPVDTSTEDKKKGKQ) the composition is skewed to basic and acidic residues. The RRM domain maps to 303 to 381 (FRIFCGDLGN…RPIKLRKSAW (79 aa)).

The protein belongs to the RRM RBM42 family.

The protein localises to the nucleus. The protein resides in the cytoplasm. May bind RNA. In Danio rerio (Zebrafish), this protein is RNA-binding protein 42 (rbm42).